A 416-amino-acid chain; its full sequence is MNKQSWLLNLSLLKTHPAFRAVFLARFISIVSLGLLGVAVPVQIQMMTHSTWQVGLSVTLTGGAMFVGLMVGGVLADRYERKKVILLARGTCGIGFIGLCLNALLPEPSLLAIYLLGLWDGFFASLGVTALLAATPALVGRENLMQAGAITMLTVRLGSVISPMIGGLLLATGGVAWNYGLAAAGTFITLLPLLSLPALPPPPQPREHPLKSLLAGFRFLLASPLVGGIALLGGLLTMASAVRVLYPALADNWQMSAAQIGFLYAAIPLGAAIGALTSGKLAHSVRPGLLMLLSTLGAFLAIGLFGLMPMWILGVVCLALFGWLSAVSSLLQYTMLQTQTPEAMLGRINGLWTAQNVTGDAIGAALLGGLGAMMTPVASASASGFGLLIIGVLLLLVLVELRRFRQTPPQVTASDS.

The Cytoplasmic segment spans residues 1-21 (MNKQSWLLNLSLLKTHPAFRA). The chain crosses the membrane as a helical span at residues 22–42 (VFLARFISIVSLGLLGVAVPV). At 43–55 (QIQMMTHSTWQVG) the chain is on the periplasmic side. The helical transmembrane segment at 56–76 (LSVTLTGGAMFVGLMVGGVLA) threads the bilayer. Over 77–83 (DRYERKK) the chain is Cytoplasmic. The chain crosses the membrane as a helical span at residues 84–104 (VILLARGTCGIGFIGLCLNAL). The Periplasmic portion of the chain corresponds to 105 to 109 (LPEPS). A helical membrane pass occupies residues 110 to 130 (LLAIYLLGLWDGFFASLGVTA). Over 131-156 (LLAATPALVGRENLMQAGAITMLTVR) the chain is Cytoplasmic. The helical transmembrane segment at 157-177 (LGSVISPMIGGLLLATGGVAW) threads the bilayer. Residue Asn178 is a topological domain, periplasmic. The chain crosses the membrane as a helical span at residues 179 to 199 (YGLAAAGTFITLLPLLSLPAL). Over 200-218 (PPPPQPREHPLKSLLAGFR) the chain is Cytoplasmic. Residues 219 to 239 (FLLASPLVGGIALLGGLLTMA) traverse the membrane as a helical segment. The Periplasmic portion of the chain corresponds to 240–256 (SAVRVLYPALADNWQMS). Residues 257-277 (AAQIGFLYAAIPLGAAIGALT) form a helical membrane-spanning segment. Residues 278–287 (SGKLAHSVRP) are Cytoplasmic-facing. Residues 288 to 307 (GLLMLLSTLGAFLAIGLFGL) form a helical membrane-spanning segment. At 308-313 (MPMWIL) the chain is on the periplasmic side. Residues 314–336 (GVVCLALFGWLSAVSSLLQYTML) form a helical membrane-spanning segment. The Cytoplasmic segment spans residues 337 to 356 (QTQTPEAMLGRINGLWTAQN). The helical transmembrane segment at 357–377 (VTGDAIGAALLGGLGAMMTPV) threads the bilayer. Ala378 is a topological domain (periplasmic). Residues 379–399 (SASASGFGLLIIGVLLLLVLV) traverse the membrane as a helical segment. The Cytoplasmic portion of the chain corresponds to 400 to 416 (ELRRFRQTPPQVTASDS).

The protein belongs to the major facilitator superfamily. EntS (TC 2.A.1.38) family.

The protein resides in the cell inner membrane. Functionally, component of an export pathway for enterobactin. The polypeptide is Enterobactin exporter EntS (Escherichia coli O6:H1 (strain CFT073 / ATCC 700928 / UPEC)).